A 340-amino-acid chain; its full sequence is Glycerol-3-phosphate dehydrogenase [NAD(P)+] (340 aa).

Residues Ser23, Trp24, Arg43, Lys44, and Lys113 each contribute to the NADPH site. The sn-glycerol 3-phosphate site is built by Lys113, Gly141, and Thr143. Ala145 lines the NADPH pocket. Sn-glycerol 3-phosphate is bound by residues Lys196, Asp249, Ser259, Arg260, and Asn261. Catalysis depends on Lys196, which acts as the Proton acceptor. Arg260 contacts NADPH. Glu286 lines the NADPH pocket.

Belongs to the NAD-dependent glycerol-3-phosphate dehydrogenase family.

The protein resides in the cytoplasm. It catalyses the reaction sn-glycerol 3-phosphate + NAD(+) = dihydroxyacetone phosphate + NADH + H(+). It carries out the reaction sn-glycerol 3-phosphate + NADP(+) = dihydroxyacetone phosphate + NADPH + H(+). Its pathway is membrane lipid metabolism; glycerophospholipid metabolism. Its function is as follows. Catalyzes the reduction of the glycolytic intermediate dihydroxyacetone phosphate (DHAP) to sn-glycerol 3-phosphate (G3P), the key precursor for phospholipid synthesis. This Zymomonas mobilis subsp. mobilis (strain ATCC 31821 / ZM4 / CP4) protein is Glycerol-3-phosphate dehydrogenase [NAD(P)+].